We begin with the raw amino-acid sequence, 129 residues long: Replication initiation control protein YabA (129 aa).

Residues 52–71 form a disordered region; the sequence is LSLTDEATPEPKAETEAEHG. Basic and acidic residues predominate over residues 60 to 71; that stretch reads PEPKAETEAEHG. Residues His-103, Cys-105, Cys-119, and Cys-122 each contribute to the Zn(2+) site.

It belongs to the YabA family. Homotetramer. Interacts with both DnaA and DnaN, acting as a bridge between these two proteins. Zn(2+) serves as cofactor.

The protein resides in the cytoplasm. It localises to the nucleoid. Involved in control of chromosome replication initiation. Inhibits the cooperative binding of DnaA to the oriC region, thus negatively regulating initiation of chromosome replication. Inhibits the ability of DnaA-ATP to form a helix on DNA; does not disassemble preformed DnaA-DNA helices. Decreases the residence time of DnaA on the chromosome at its binding sites (oriC, replication forks and promoter-binding sites). Tethers DnaA to the replication machinery via the DNA polymerase beta sliding clamp subunit (dnaN). Associates with oriC and other DnaA targets on the chromosome in a DnaA-dependent manner. The polypeptide is Replication initiation control protein YabA (Listeria monocytogenes serotype 4a (strain HCC23)).